Consider the following 43-residue polypeptide: Venom protein E2 (43 aa).

2 disulfides stabilise this stretch: cysteine 3/cysteine 20 and cysteine 14/cysteine 39.

In terms of tissue distribution, expressed by the venom gland.

It localises to the secreted. Its function is as follows. Neurotoxin. Blocks muscular nicotinic acetylcholine receptors (nAChR). The chain is Venom protein E2 from Micrurus pyrrhocryptus (Coral snake).